Consider the following 231-residue polypeptide: 5'-methylthioadenosine/S-adenosylhomocysteine nucleosidase (231 aa).

The Proton acceptor role is filled by Glu12. Residues Gly78, Met153, and 174-175 (ME) each bind substrate. Catalysis depends on Asp198, which acts as the Proton donor.

This sequence belongs to the PNP/UDP phosphorylase family. MtnN subfamily.

It catalyses the reaction S-adenosyl-L-homocysteine + H2O = S-(5-deoxy-D-ribos-5-yl)-L-homocysteine + adenine. It carries out the reaction S-methyl-5'-thioadenosine + H2O = 5-(methylsulfanyl)-D-ribose + adenine. The enzyme catalyses 5'-deoxyadenosine + H2O = 5-deoxy-D-ribose + adenine. It functions in the pathway amino-acid biosynthesis; L-methionine biosynthesis via salvage pathway; S-methyl-5-thio-alpha-D-ribose 1-phosphate from S-methyl-5'-thioadenosine (hydrolase route): step 1/2. Its function is as follows. Catalyzes the irreversible cleavage of the glycosidic bond in both 5'-methylthioadenosine (MTA) and S-adenosylhomocysteine (SAH/AdoHcy) to adenine and the corresponding thioribose, 5'-methylthioribose and S-ribosylhomocysteine, respectively. Also cleaves 5'-deoxyadenosine, a toxic by-product of radical S-adenosylmethionine (SAM) enzymes, into 5-deoxyribose and adenine. This Bacillus licheniformis (strain ATCC 14580 / DSM 13 / JCM 2505 / CCUG 7422 / NBRC 12200 / NCIMB 9375 / NCTC 10341 / NRRL NRS-1264 / Gibson 46) protein is 5'-methylthioadenosine/S-adenosylhomocysteine nucleosidase.